Consider the following 275-residue polypeptide: MSAVAPHPVPAPALAAARAALTERAPLVQCLTNSVVQTITANALLAAGAAPAMVDNVHESAAFAQIASAVLVNVGTLDDDRARAMGLAAQSADRSRTPWVLDPVAVGGLEFRTRVARDLLASSPTVVRGNASEVLGLAGAGSGGRGVDSTAGAEEAVEAARELSRRTGGAVAVSGVVDVLVHDGRTLRVSGGHVLLTRTTGAGCSLGALVAAYAAVEDDPLVAAAAAHVHVAIAAERAAARAARPGSFATAWIDELDAVDADAVRADLETSGRLA.

Methionine 53 is a substrate binding site. 2 residues coordinate ATP: arginine 128 and serine 174. Glycine 201 serves as a coordination point for substrate.

Belongs to the Thz kinase family. It depends on Mg(2+) as a cofactor.

The catalysed reaction is 5-(2-hydroxyethyl)-4-methylthiazole + ATP = 4-methyl-5-(2-phosphooxyethyl)-thiazole + ADP + H(+). Its pathway is cofactor biosynthesis; thiamine diphosphate biosynthesis; 4-methyl-5-(2-phosphoethyl)-thiazole from 5-(2-hydroxyethyl)-4-methylthiazole: step 1/1. Functionally, catalyzes the phosphorylation of the hydroxyl group of 4-methyl-5-beta-hydroxyethylthiazole (THZ). The protein is Hydroxyethylthiazole kinase of Kineococcus radiotolerans (strain ATCC BAA-149 / DSM 14245 / SRS30216).